A 291-amino-acid chain; its full sequence is ATP synthase gamma chain (291 aa).

Belongs to the ATPase gamma chain family. F-type ATPases have 2 components, CF(1) - the catalytic core - and CF(0) - the membrane proton channel. CF(1) has five subunits: alpha(3), beta(3), gamma(1), delta(1), epsilon(1). CF(0) has three main subunits: a, b and c.

The protein localises to the cell membrane. Its function is as follows. Produces ATP from ADP in the presence of a proton gradient across the membrane. The gamma chain is believed to be important in regulating ATPase activity and the flow of protons through the CF(0) complex. This Streptococcus pyogenes serotype M49 (strain NZ131) protein is ATP synthase gamma chain.